The following is a 177-amino-acid chain: TRAF-interacting protein with FHA domain-containing protein A (177 aa).

In terms of domain architecture, FHA spans 48-104 (VAFGRDYNVCRYPLLSNRVSRIQFNLQFFKHFNCSTTAIEIKNLSKKNKLYVDNLEL).

The protein belongs to the TIFA family. Interacts with traf6.

The protein localises to the cytoplasm. In terms of biological role, adapter molecule that plays a key role in the activation of pro-inflammatory NF-kappa-B signaling following detection of bacterial pathogen-associated molecular pattern metabolites (PAMPs). Promotes activation of an innate immune response by inducing the oligomerization and polyubiquitination of TRAF6, which leads to the activation of TAK1 and IKK through a proteasome-independent mechanism. In Xenopus tropicalis (Western clawed frog), this protein is TRAF-interacting protein with FHA domain-containing protein A.